A 616-amino-acid polypeptide reads, in one-letter code: Bifunctional 2-aminoethylphosphonate cytidylyltransferase/aminotransferase (616 aa).

The 2-aminoethylphosphonate cytidylyltransferase stretch occupies residues 1-240; it reads MIKQAVILAG…VKNIYPHIVE (240 aa). Positions 8, 10, 11, 25, 83, 88, 104, and 105 each coordinate CMP-(2-aminoethyl)phosphonate. Mg(2+) is bound by residues D106 and D136. CMP-(2-aminoethyl)phosphonate is bound by residues D136, K153, and E196. Residues E220 and D222 each contribute to the Mg(2+) site. A 2-aminoethylphosphonate aminotransferase region spans residues 250-616; the sequence is EVLLNPGPAT…EYMNGIGVGV (367 aa). Pyridoxal 5'-phosphate contacts are provided by S313, G314, T315, T390, K441, and T490.

It in the N-terminal section; belongs to the LicC/PntC cytidylyltransferase family. In the C-terminal section; belongs to the class-V pyridoxal-phosphate-dependent aminotransferase family. PhnW subfamily. As to quaternary structure, homodimer. Mg(2+) serves as cofactor. It depends on Zn(2+) as a cofactor. Pyridoxal 5'-phosphate is required as a cofactor.

It carries out the reaction (2-aminoethyl)phosphonate + CTP = CMP-(2-aminoethyl)phosphonate + diphosphate. The catalysed reaction is (2-aminoethyl)phosphonate + pyruvate = phosphonoacetaldehyde + L-alanine. The protein operates within phosphorus metabolism; phosphonate biosynthesis. Its activity is regulated as follows. Cytidylyltransferase activity is inhibited in the presence of EDTA and is restored by the addition of Mg(2+) or Zn(2+). Bifunctional transferase involved in the biosynthesis of cell-surface phosphonates. The aminotransferase region catalyzes the transformation of phosphonoacetaldehyde (PnAA) to 2-aminoethylphosphonate (AEP). The cytidylyltransferase region catalyzes the activation of 2-aminoethylphosphonate (AEP) to CMP-2-aminoethylphosphonate (CMP-AEP). Cannot use phosphocholine. Exhibits strong activity towards CTP, limited activity towards ATP and no activity with GTP. This is Bifunctional 2-aminoethylphosphonate cytidylyltransferase/aminotransferase from Treponema denticola (strain ATCC 35405 / DSM 14222 / CIP 103919 / JCM 8153 / KCTC 15104).